A 633-amino-acid polypeptide reads, in one-letter code: NBPF family member NBPF3 (633 aa).

The tract at residues 15 to 52 is disordered; it reads RGPDVETSPFGAPRAASHGVGRHQELRDPTVPGPTSSA. Residues 127-186 adopt a coiled-coil conformation; that stretch reads LRDERLLTEEKLAEELGQAEELRQYKVLVHSQERELTQLREKLQEGRDASRSLNQHLQAL. 5 Olduvai domains span residues 221-313, 314-402, 405-460, 461-552, and 555-633; these read ENDD…CIIP, ENES…ATSP, SREL…LDLD, RMKK…PPCP, and NEVL…IFPH. A compositionally biased stretch (basic and acidic residues) spans 316-326; sequence ESDHEQEEEKG. Residues 316 to 370 form a disordered region; that stretch reads ESDHEQEEEKGPVSPRNLQESEEEEAPQESWDEGDWTLSIPPDMSASYQSDRSTF. A compositionally biased stretch (acidic residues) spans 335 to 350; that stretch reads ESEEEEAPQESWDEGD. Positions 463 to 484 are disordered; that stretch reads KKDQEEEEDQGPPCPRLSRELP.

Belongs to the NBPF family. As to expression, expressed in testis and fetal heart, as well as in non small cell lung carcinoma and neuroblastoma cell line.

The protein localises to the cytoplasm. This Homo sapiens (Human) protein is NBPF family member NBPF3.